The following is a 177-amino-acid chain: Nucleoside-triphosphatase THEP1 (177 aa).

ATP is bound by residues 10–17 (GKPGIGKT) and 101–108 (CLVIDEIG).

The protein belongs to the THEP1 NTPase family.

The enzyme catalyses a ribonucleoside 5'-triphosphate + H2O = a ribonucleoside 5'-diphosphate + phosphate + H(+). In terms of biological role, has nucleotide phosphatase activity towards ATP, GTP, CTP, TTP and UTP. May hydrolyze nucleoside diphosphates with lower efficiency. This is Nucleoside-triphosphatase THEP1 from Natranaerobius thermophilus (strain ATCC BAA-1301 / DSM 18059 / JW/NM-WN-LF).